The primary structure comprises 708 residues: Solute carrier family 15 member 1 (708 aa).

A helical membrane pass occupies residues 1-21 (MGMSKSHSFFGYPLSIFFIVV). Over 22 to 53 (NEFCERFSYYGMRAILILYFTNFISWDDNLST) the chain is Extracellular. A glycan (N-linked (GlcNAc...) asparagine) is linked at Asn50. The chain crosses the membrane as a helical span at residues 54–74 (AIYHTFVALCYLTPILGALIA). Topologically, residues 75–82 (DSWLGKFK) are cytoplasmic. The chain crosses the membrane as a helical span at residues 83 to 103 (TIVSLSIVYTIGQAVTSVSSI). Residues 104–118 (NDLTDHNHDGTPDSL) lie on the Extracellular side of the membrane. Residues 119–139 (PVHVVLSLIGLALIALGTGGI) traverse the membrane as a helical segment. Residues 140-161 (KPCVSAFGGDQFEEGQEKQRNR) are Cytoplasmic-facing. The helical transmembrane segment at 162-182 (FFSIFYLAINAGSLLSTIITP) threads the bilayer. Residues 183–198 (MLRVQQCGIHSKQACY) are Extracellular-facing. The helical transmembrane segment at 199-219 (PLAFGVPAALMAVALIVFVLG) threads the bilayer. Topologically, residues 220–276 (SGMYKKFKPQGNIMGKVAKCIGFAIKNRFRHRSKAFPKREHWLDWAKEKYDERLISQ) are cytoplasmic. A helical membrane pass occupies residues 277–297 (IKMVTRVMFLYIPLPMFWALF). The Extracellular portion of the chain corresponds to 298–327 (DQQGSRWTLQATTMSGKIGALEIQPDQMQT). The helical transmembrane segment at 328 to 348 (VNAILIVIMVPIFDAVLYPLI) threads the bilayer. Residues 349-361 (AKCGFNFTSLKKM) lie on the Cytoplasmic side of the membrane. A helical membrane pass occupies residues 362 to 382 (AVGMVLASMAFVVAAIVQVEI). Over 383–584 (DKTLPVFPKG…SANTVNMALQ (202 aa)) the chain is Extracellular. Residues 383-584 (DKTLPVFPKG…SANTVNMALQ (202 aa)) form an extracellular domain (ECD) region. N-linked (GlcNAc...) asparagine glycosylation is found at Asn404, Asn408, Asn439, Asn509, Asn514, and Asn562. A helical membrane pass occupies residues 585 to 605 (IPQYFLLTCGEVVFSVTGLEF). Topologically, residues 606-619 (SYSQAPSNMKSVLQ) are cytoplasmic. Residues 620–640 (AGWLLTVAVGNIIVLIVAGAG) form a helical membrane-spanning segment. The Extracellular portion of the chain corresponds to 641–645 (QFSKQ). The helical transmembrane segment at 646–666 (WAEYILFAALLLVVCVIFAIM) threads the bilayer. Over 667–708 (ARFYTYINPAEIEAQFDEDEKKNRLEKSNPYFMSGANSQKQM) the chain is Cytoplasmic.

This sequence belongs to the major facilitator superfamily. Proton-dependent oligopeptide transporter (POT/PTR) (TC 2.A.17) family. Interacts (via extracellular domain region) with trypsin. In terms of tissue distribution, expressed in small intestine.

It is found in the apical cell membrane. It carries out the reaction a dipeptide(out) + H(+)(out) = a dipeptide(in) + H(+)(in). The catalysed reaction is an L-amino acid tripeptide(out) + H(+)(out) = an L-amino acid tripeptide(in) + H(+)(in). It catalyses the reaction L-alanyl-L-lysine(out) + H(+)(out) = L-alanyl-L-lysine(in) + H(+)(in). The enzyme catalyses L-alanyl-L-proline(out) + H(+)(out) = L-alanyl-L-proline(in) + H(+)(in). It carries out the reaction L-alanyl-L-valine(out) + H(+)(out) = L-alanyl-L-valine(in) + H(+)(in). The catalysed reaction is carnosine(out) + H(+)(out) = carnosine(in) + H(+)(in). It catalyses the reaction glycyl-L-glutamine(out) + H(+)(out) = glycyl-L-glutamine(in) + H(+)(in). The enzyme catalyses glycyl-L-leucine(out) + H(+)(out) = glycyl-L-leucine(in) + H(+)(in). It carries out the reaction glycyl-L-proline(out) + H(+)(out) = glycyl-L-proline(in) + H(+)(in). The catalysed reaction is glycyl-sarcosine(out) + H(+)(out) = glycyl-sarcosine(in) + H(+)(in). It catalyses the reaction L-leucyl-L-leucine(out) + H(+)(out) = L-leucyl-L-leucine(in) + H(+)(in). The enzyme catalyses L-leucyl-L-proline(out) + H(+)(out) = L-leucyl-L-proline(in) + H(+)(in). It carries out the reaction L-phenylalanyl-L-leucine(out) + H(+)(out) = L-phenylalanyl-L-leucine(in) + H(+)(in). The catalysed reaction is L-phenylalanyl-L-phenylalanine(out) + H(+)(out) = L-phenylalanyl-L-phenylalanine(in) + H(+)(in). It catalyses the reaction L-lysyl-glycine(out) + H(+)(out) = L-lysyl-glycine(in) + H(+)(in). The enzyme catalyses L-tyrosylglycine(out) + H(+)(out) = L-tyrosylglycine(in) + H(+)(in). It carries out the reaction L-alanyl-L-aspartate(out) + 2 H(+)(out) = L-alanyl-L-aspartate(in) + 2 H(+)(in). The catalysed reaction is L-aspartyl-glycine(out) + 2 H(+)(out) = L-aspartyl-glycine(in) + 2 H(+)(in). It catalyses the reaction glycyl-L-aspartate(out) + 2 H(+)(out) = glycyl-L-aspartate(in) + 2 H(+)(in). The enzyme catalyses glycyl-L-glutamate(out) + 2 H(+)(out) = glycyl-L-glutamate(in) + 2 H(+)(in). It carries out the reaction L-alanyl-L-leucyl-L-alanine(out) + H(+)(out) = L-alanyl-L-leucyl-L-alanine(in) + H(+)(in). The catalysed reaction is L-alanyl-L-prolylglycine(out) + H(+)(out) = L-alanyl-L-prolylglycine(in) + H(+)(in). It catalyses the reaction glycylglycyl-L-isoleucine(out) + H(+)(out) = glycylglycyl-L-isoleucine(in) + H(+)(in). The enzyme catalyses glycylglycyl-L-proline(out) + H(+)(out) = glycylglycyl-L-proline(in) + H(+)(in). It carries out the reaction L-methionyl-L-phenylalanyl-L-methionine(out) + H(+)(out) = L-methionyl-L-phenylalanyl-L-methionine(in) + H(+)(in). The catalysed reaction is N-acetyl-D-muramoyl-L-alanyl-D-isoglutamine(out) + 2 H(+)(out) = N-acetyl-D-muramoyl-L-alanyl-D-isoglutamine(in) + 2 H(+)(in). It catalyses the reaction N(alpha)-formyl-L-methionyl-L-leucyl-L-phenylalanine(out) + 2 H(+)(out) = N(alpha)-formyl-L-methionyl-L-leucyl-L-phenylalanine(in) + 2 H(+)(in). Its function is as follows. Electrogenic proton-coupled amino-acid transporter that transports oligopeptides of 2 to 4 amino acids with a preference for dipeptides. Transports neutral and monovalently charged peptides with a proton to peptide stoichiometry of 1:1 or 2:1. Primarily responsible for the absorption of dietary di- and tripeptides from the small intestinal lumen. Mediates transepithelial transport of muramyl and N-formylated bacterial dipeptides contributing to recognition of pathogenic bacteria by the mucosal immune system. The sequence is that of Solute carrier family 15 member 1 from Homo sapiens (Human).